A 711-amino-acid chain; its full sequence is Amyloid beta precursor protein binding family B member 1 (711 aa).

Ser-135 is modified (phosphoserine). Disordered regions lie at residues 140-257 (NTQG…SDLP), 277-300 (GTTQ…EESQ), and 321-364 (EPSE…QRNA). Residues 156–174 (EVEEEDEDEEEEDEEEEDL) are compositionally biased toward acidic residues. An N6-acetyllysine modification is found at Lys-205. The segment covering 224–235 (SWATLSQGSPSY) has biased composition (polar residues). A WW domain is found at 254–286 (SDLPAGWMRVQDTSGTYYWHIPTGTTQWEPPGR). Residues 288–300 (SPSQGNSPQEESQ) are compositionally biased toward polar residues. PID domains lie at 365–533 (NPGI…QVEF) and 538–700 (NELV…LWGS). Ser-460 is subject to Phosphoserine; by PKC. Position 518 is a phosphoserine (Ser-518). Phosphotyrosine; by ABL1 is present on Tyr-548. Residue Ser-611 is modified to Phosphoserine; by SGK1. The residue at position 702 (Lys-702) is an N6-acetyllysine.

In terms of assembly, component of a complex, at least composed of APBB1, RASD1/DEXRAS1 and APP. Interacts (via PID domain 2) with APP (with the intracellular domain of the amyloid-beta precursor protein). Interacts (via PID domain 2) with RASD1/DEXRAS1; impairs the transcription activation activity. Interacts (via PID domain 1) with KAT5/TIP60. Interacts (via the WW domain) with the proline-rich region of APBB1IP. Interacts with TSHZ1 and TSHZ2. Interacts (via the WW domain) with histone H2AX (when phosphorylated on 'Tyr-142') and the proline-rich region of ENAH. Interacts with MAPK8. Interacts (via PID domain 1) with TSHZ3 (via homeobox domain). Interacts with SET. Found in a trimeric complex with HDAC1 and TSHZ3; the interaction between HDAC1 and APBB1 is mediated by TSHZ3. Interacts (via WWW domain) with NEK6. Interacts (via WWW domain) with ABL1. Interacts with RNF157. Interacts with ARF6. In terms of processing, polyubiquitination by RNF157 leads to degradation by the proteasome. Post-translationally, phosphorylation at Ser-611 by SGK1 promotes its localization to the nucleus. Phosphorylated following nuclear translocation. Phosphorylation at Tyr-547 by ABL1 enhances transcriptional activation activity and reduces the affinity for RASD1/DEXRAS1. Phosphorylated at Ser-460 by PKC upon insulin activation. Acetylation at Lys-205 and Lys-702 by KAT5 promotes its transcription activator activity. In terms of tissue distribution, brain, not in liver, very low in other tissues. The long (neuron-specific) form is expressed only in brain.

It is found in the cell membrane. It localises to the cytoplasm. The protein localises to the nucleus. Its subcellular location is the cell projection. The protein resides in the growth cone. It is found in the nucleus speckle. In terms of biological role, transcription coregulator that can have both coactivator and corepressor functions. Adapter protein that forms a transcriptionally active complex with the gamma-secretase-derived amyloid precursor protein (APP) intracellular domain. Plays a central role in the response to DNA damage by translocating to the nucleus and inducing apoptosis. May act by specifically recognizing and binding histone H2AX phosphorylated on 'Tyr-142' (H2AXY142ph) at double-strand breaks (DSBs), recruiting other pro-apoptosis factors such as MAPK8/JNK1. Required for histone H4 acetylation at double-strand breaks (DSBs). Its ability to specifically bind modified histones and chromatin modifying enzymes such as KAT5/TIP60, probably explains its transcription activation activity. Functions in association with TSHZ3, SET and HDAC factors as a transcriptional repressor, that inhibits the expression of CASP4. Associates with chromatin in a region surrounding the CASP4 transcriptional start site(s). Involved in hippocampal neurite branching and neuromuscular junction formation, as a result plays a role in spatial memory functioning. Plays a role in the maintenance of lens transparency. May play a role in muscle cell strength. Acts as a molecular adapter that functions in neurite outgrowth by activating the RAC1-ARF6 axis upon insulin treatment. This is Amyloid beta precursor protein binding family B member 1 from Rattus norvegicus (Rat).